Consider the following 380-residue polypeptide: Probable tRNA sulfurtransferase (380 aa).

In terms of domain architecture, THUMP spans 58-162 (EEVIERLKKV…MAFVYAGVIE (105 aa)). ATP contacts are provided by residues 178 to 179 (LL), 203 to 204 (YF), Arg-260, Gly-282, and Gln-291.

This sequence belongs to the ThiI family.

It is found in the cytoplasm. It carries out the reaction [ThiI sulfur-carrier protein]-S-sulfanyl-L-cysteine + a uridine in tRNA + 2 reduced [2Fe-2S]-[ferredoxin] + ATP + H(+) = [ThiI sulfur-carrier protein]-L-cysteine + a 4-thiouridine in tRNA + 2 oxidized [2Fe-2S]-[ferredoxin] + AMP + diphosphate. The enzyme catalyses [ThiS sulfur-carrier protein]-C-terminal Gly-Gly-AMP + S-sulfanyl-L-cysteinyl-[cysteine desulfurase] + AH2 = [ThiS sulfur-carrier protein]-C-terminal-Gly-aminoethanethioate + L-cysteinyl-[cysteine desulfurase] + A + AMP + 2 H(+). The protein operates within cofactor biosynthesis; thiamine diphosphate biosynthesis. In terms of biological role, catalyzes the ATP-dependent transfer of a sulfur to tRNA to produce 4-thiouridine in position 8 of tRNAs, which functions as a near-UV photosensor. Also catalyzes the transfer of sulfur to the sulfur carrier protein ThiS, forming ThiS-thiocarboxylate. This is a step in the synthesis of thiazole, in the thiamine biosynthesis pathway. The sulfur is donated as persulfide by IscS. The protein is Probable tRNA sulfurtransferase of Thermoanaerobacter sp. (strain X514).